Consider the following 582-residue polypeptide: Formate--tetrahydrofolate ligase (582 aa).

ATP is bound at residue 65–72 (TPLGEGKT).

This sequence belongs to the formate--tetrahydrofolate ligase family.

The catalysed reaction is (6S)-5,6,7,8-tetrahydrofolate + formate + ATP = (6R)-10-formyltetrahydrofolate + ADP + phosphate. It functions in the pathway one-carbon metabolism; tetrahydrofolate interconversion. The polypeptide is Formate--tetrahydrofolate ligase (Vibrio cholerae serotype O1 (strain ATCC 39315 / El Tor Inaba N16961)).